A 227-amino-acid polypeptide reads, in one-letter code: Izumo sperm-egg fusion protein 4 (227 aa).

A signal peptide spans 1–24 (MFGQGRLGQAMALLLFLGMTAALA). Asn153 and Asn214 each carry an N-linked (GlcNAc...) asparagine glycan.

Belongs to the Izumo family.

It localises to the secreted. The chain is Izumo sperm-egg fusion protein 4 (Izumo4) from Mus musculus (Mouse).